Here is a 227-residue protein sequence, read N- to C-terminus: Pre-hexon-linking protein VIII (227 aa).

Thr64 is subject to Phosphothreonine; by host. Positions 112-157 (FRHRVRSPGQGITHLKIRGRGIQLNDESVSSSLGLRPDGTFQIGGA) are excised as a propeptide. 2 positions are modified to phosphoserine; by host: Ser118 and Ser174.

Belongs to the adenoviridae hexon-linking protein family. In terms of assembly, interacts with the peripentonal hexons as well as the hexons in the facets. Part of a complex composed of the core-capsid bridging protein, the endosome lysis protein VI and the hexon-linking protein VIII; these interactions bridge the virus core to the capsid. Cleaved by the viral protease during virion maturation. May cause the middle segment to be shed from the capsid.

The protein resides in the virion. The protein localises to the host nucleus. Its function is as follows. Structural component of the virion that acts as a cement protein on the capsid interior and which glue the peripentonal hexons and group-of-nine hexons together. The sequence is that of Pre-hexon-linking protein VIII from Homo sapiens (Human).